A 598-amino-acid polypeptide reads, in one-letter code: Elongation factor 4 (598 aa).

Residues 2-183 (KNIRNFCIIA…AIINRVPAPS (182 aa)) enclose the tr-type G domain. GTP-binding positions include 14–19 (DHGKST) and 130–133 (NKVD).

This sequence belongs to the TRAFAC class translation factor GTPase superfamily. Classic translation factor GTPase family. LepA subfamily.

The protein resides in the cell inner membrane. The enzyme catalyses GTP + H2O = GDP + phosphate + H(+). Its function is as follows. Required for accurate and efficient protein synthesis under certain stress conditions. May act as a fidelity factor of the translation reaction, by catalyzing a one-codon backward translocation of tRNAs on improperly translocated ribosomes. Back-translocation proceeds from a post-translocation (POST) complex to a pre-translocation (PRE) complex, thus giving elongation factor G a second chance to translocate the tRNAs correctly. Binds to ribosomes in a GTP-dependent manner. This chain is Elongation factor 4, found in Christiangramia forsetii (strain DSM 17595 / CGMCC 1.15422 / KT0803) (Gramella forsetii).